We begin with the raw amino-acid sequence, 621 residues long: Growth factor receptor-bound protein 10 (621 aa).

2 stretches are compositionally biased toward polar residues: residues 1 to 23 and 33 to 59; these read MNNDINSSVESLNSACNMQSDTD and HASNQGAASSSRGQPQASPRQKMQRSQ. The tract at residues 1–118 is disordered; sequence MNNDINSSVE…PSQPPAKHCG (118 aa). Ser-50 and Ser-96 each carry phosphoserine. Residues 95 to 112 are compositionally biased toward pro residues; the sequence is GSPPSVAPSSLPPPPSQP. Residues 194–278 enclose the Ras-associating domain; that stretch reads LRKDVKVFSE…SKFLFRKNYA (85 aa). One can recognise a PH domain in the interval 318-427; it reads CPEIQGFLQV…WMTAFRLLKY (110 aa). The residue at position 455 (Ser-455) is a Phosphoserine; by MTOR and PKB/AKT1. Residues Ser-458 and Ser-503 each carry the phosphoserine modification. Positions 520 to 601 constitute an SH2 domain; that stretch reads WFHGRISREE…SDLIQLVDFY (82 aa).

Belongs to the GRB7/10/14 family. As to quaternary structure, interacts with ligand-activated tyrosine kinase receptors, including FGFR1, INSR, IGF1R, MET and PDGFRB in a phosphotyrosine-dependent manner through the SH2 domain. Poorly binds to the EGFR. Directly interacts with MAP3K14/NIK and is recruited to the EGFR-ERBB2 complex. Interacts with GIGYF1/PERQ1 and GIGYF2/TNRC15. When unphosphorylated, interacts with AKT1 and when phosphorylated with YWHAE/14-3-3 epsilon. Interacts with NEDD4. Interacts with LRP6, thus interfering with the binding of AXIN1 to LRP6. Binds to activated NRAS. Post-translationally, phosphorylated on serine residues upon EGF, FGF and PDGF stimulation. As to expression, widely expressed.

Its subcellular location is the cytoplasm. With respect to regulation, phosphorylation by mTORC1 stabilizes and activates GRB10 constituting a feedback pathway by which mTORC1 inhibits INSR-dependent signaling. Functionally, adapter protein which modulates coupling of a number of cell surface receptor kinases with specific signaling pathways. Binds to, and suppress signals from, activated receptors tyrosine kinases, including the insulin (INSR) and insulin-like growth factor (IGF1R) receptors. The inhibitory effect can be achieved by 2 mechanisms: interference with the signaling pathway and increased receptor degradation. Delays and reduces AKT1 phosphorylation in response to insulin stimulation. Blocks association between INSR and IRS1 and IRS2 and prevents insulin-stimulated IRS1 and IRS2 tyrosine phosphorylation. Recruits NEDD4 to IGF1R, leading to IGF1R ubiquitination, increased internalization and degradation by both the proteasomal and lysosomal pathways. A similar role in the mediation of ubiquitination also has been suggested with INSR. Negatively regulates Wnt signaling by interacting with LRP6 intracellular portion and interfering with the binding of AXIN1 to LRP6. Positive regulator of the KDR/VEGFR-2 signaling pathway. May inhibit NEDD4-mediated degradation of KDR/VEGFR-2. This Mus musculus (Mouse) protein is Growth factor receptor-bound protein 10 (Grb10).